Reading from the N-terminus, the 398-residue chain is Nuclear egress protein 2 (398 aa).

The Perinuclear space portion of the chain corresponds to 1 to 359 (MEMNKVLHQD…GPSRPQSGPW (359 aa)). Disordered regions lie at residues 202-246 (ALTR…PPPP) and 306-334 (LEEHVSRRRGVSTHHRHPPSPPCTPSLER). Positions 215-224 (ASPPPPPPRH) are enriched in pro residues. Position 216 is a phosphoserine (Ser216). Residues 225–240 (PSCSPTMVAAGGAAAG) show a composition bias toward low complexity. Over residues 311–323 (SRRRGVSTHHRHP) the composition is skewed to basic residues. Residues 360–382 (LPARFATLGPLVLALLLVLALLW) traverse the membrane as a helical segment. Over 383 to 398 (RGHGQSSSPTRSAHRD) the chain is Nuclear.

Belongs to the herpesviridae NEC2 protein family. Forms a heterohexameric complex with NEC1. Interacts with host UBA7 and RNF170; this interaction promotes UBA7 proteasomal degradation. Post-translationally, phosphorylated. Phosphorylation by viral kinase UL97 at Ser-216 plays an important role for correct viral nuclear egress complex (NEC) localization.

Its subcellular location is the host nucleus inner membrane. In terms of biological role, plays an essential role in virion nuclear egress, the first step of virion release from infected cell. Within the host nucleus, NEC1 interacts with the newly formed capsid through the vertexes and directs it to the inner nuclear membrane by associating with NEC2. Induces the budding of the capsid at the inner nuclear membrane as well as its envelopment into the perinuclear space. There, the NEC1/NEC2 complex promotes the fusion of the enveloped capsid with the outer nuclear membrane and the subsequent release of the viral capsid into the cytoplasm where it will reach the secondary budding sites in the host Golgi or trans-Golgi network. Inhibits host ISGylation and subsequent innate antiviral response by targeting host UBA7 for proteasomal degradation. The sequence is that of Nuclear egress protein 2 from Homo sapiens (Human).